The sequence spans 153 residues: Ribonuclease H (153 aa).

In terms of domain architecture, RNase H type-1 spans 1–141 (MKHVHIFTDG…ADELARKGME (141 aa)). Mg(2+) contacts are provided by aspartate 9, glutamate 47, aspartate 69, and aspartate 133. Residues 123 to 153 (HAGHPENERADELARKGMEPFKKARRADAVK) are disordered. Residues 125-153 (GHPENERADELARKGMEPFKKARRADAVK) are compositionally biased toward basic and acidic residues.

This sequence belongs to the RNase H family. As to quaternary structure, monomer. Requires Mg(2+) as cofactor.

The protein localises to the cytoplasm. The enzyme catalyses Endonucleolytic cleavage to 5'-phosphomonoester.. Endonuclease that specifically degrades the RNA of RNA-DNA hybrids. The protein is Ribonuclease H of Rhizobium meliloti (strain 1021) (Ensifer meliloti).